Consider the following 265-residue polypeptide: Small ribosomal subunit protein eS4 (265 aa).

An S4 RNA-binding domain is found at 42–104 (LPLILIIRNR…TGENYRLLYD (63 aa)).

The protein belongs to the eukaryotic ribosomal protein eS4 family.

Its subcellular location is the cytoplasm. The sequence is that of Small ribosomal subunit protein eS4 (RPS4) from Oryza sativa subsp. japonica (Rice).